The following is a 95-amino-acid chain: Small ribosomal subunit protein uS19 (95 aa).

This sequence belongs to the universal ribosomal protein uS19 family.

In terms of biological role, protein S19 forms a complex with S13 that binds strongly to the 16S ribosomal RNA. The protein is Small ribosomal subunit protein uS19 of Bdellovibrio bacteriovorus (strain ATCC 15356 / DSM 50701 / NCIMB 9529 / HD100).